We begin with the raw amino-acid sequence, 633 residues long: Probably inactive receptor-like protein kinase At2g46850 (633 aa).

Positions 1–28 are cleaved as a signal peptide; that stretch reads MPPLFLPSSSSALFLLLLLLLTLQTLTS. Residues 29 to 285 lie on the Extracellular side of the membrane; the sequence is ISLSQPQALR…IKKHNGKKLT (257 aa). N-linked (GlcNAc...) asparagine glycans are attached at residues N45, N69, and N231. A helical transmembrane segment spans residues 286-306; it reads VLAGVLAPLFILGSLLALFCL. Residues 307–633 are Cytoplasmic-facing; that stretch reads LKRPVTSHKD…SPDSIYLPKT (327 aa). Residues 355-633 enclose the Protein kinase domain; sequence FQDSQKLTQG…SPDSIYLPKT (279 aa). Residues 361-369 and K384 contribute to the ATP site; that span reads LTQGKTGTI.

The protein belongs to the protein kinase superfamily. Ser/Thr protein kinase family.

It is found in the membrane. In Arabidopsis thaliana (Mouse-ear cress), this protein is Probably inactive receptor-like protein kinase At2g46850.